Here is a 122-residue protein sequence, read N- to C-terminus: Small ribosomal subunit protein uS13 (122 aa).

Residues 95 to 122 are disordered; that stretch reads GLPVRGQKTKTNARTRKGPKRTVANKKK.

The protein belongs to the universal ribosomal protein uS13 family. As to quaternary structure, part of the 30S ribosomal subunit. Forms a loose heterodimer with protein S19. Forms two bridges to the 50S subunit in the 70S ribosome.

Functionally, located at the top of the head of the 30S subunit, it contacts several helices of the 16S rRNA. In the 70S ribosome it contacts the 23S rRNA (bridge B1a) and protein L5 of the 50S subunit (bridge B1b), connecting the 2 subunits; these bridges are implicated in subunit movement. Contacts the tRNAs in the A and P-sites. This chain is Small ribosomal subunit protein uS13, found in Lachnoclostridium phytofermentans (strain ATCC 700394 / DSM 18823 / ISDg) (Clostridium phytofermentans).